The primary structure comprises 1071 residues: Methionine S-methyltransferase (1071 aa).

Ala-2 bears the N-acetylalanine mark.

The protein belongs to the class I-like SAM-binding methyltransferase superfamily. In terms of assembly, homotetramer. As to expression, expressed in roots, rosette leaves and cauline leaves. Expressed at a lower level in developing seeds.

The protein resides in the cytoplasm. It catalyses the reaction L-methionine + S-adenosyl-L-methionine = S-methyl-L-methionine + S-adenosyl-L-homocysteine. Catalyzes the S-methylmethionine (SMM) biosynthesis from adenosyl-L-homocysteine (AdoMet) and methionine. SMM biosynthesis (by MMT1) and degradation (by HMT-1, HMT-2 and HMT-3) constitute the SMM cycle in plants, which is probably required to achieve short term control of AdoMet level. Also able to catalyze the selenium-methylmethionine (SeMM) from AdoMet and selenium-methionine (SeMet). May play a role in phoem sulfur transport; such function is however not essential. The polypeptide is Methionine S-methyltransferase (MMT1) (Arabidopsis thaliana (Mouse-ear cress)).